A 470-amino-acid chain; its full sequence is Sorting nexin-17 (470 aa).

Positions 1 to 109 (MHFSIPETES…SFLRRAQQET (109 aa)) constitute a PX domain. A 1,2-diacyl-sn-glycero-3-phospho-(1D-myo-inositol-3-phosphate) contacts are provided by R36, S38, K62, and R75. The region spanning 115 to 206 (EEVSLEVLLS…YKIVLRKSYW (92 aa)) is the Ras-associating domain. Residues 115-432 (EEVSLEVLLS…DATRESMVKL (318 aa)) are FERM-like. The PTB-like F3 module stretch occupies residues 270 to 432 (GYLRFDACVA…DATRESMVKL (163 aa)). Residues S336, S407, S409, S415, S421, S437, and S440 each carry the phosphoserine modification. The segment at 401–426 (GGTLRRSDSQQAVKSPPLLESPDATR) is disordered. An interacts with the retriever complex region spans residues 458 to 470 (GNFAFEGIGDEDL).

This sequence belongs to the sorting nexin family. In terms of assembly, monomer. Interacts with APP (via cytoplasmic YXNPXY motif). Interacts with KIF1B. Interacts with the C-termini of P-selectin, PTC, LDLR, VLDLR, LRP1 and LRP8. Interacts with KRIT1 (via N-terminus). Interacts with HRAS. Interacts with ITGB1 and ITGB5 (via NPxY motif). Interacts with CCDC22 and CCDC93; the interaction associates SNX17 with the CCC complex. Interacts (via C-terminus) with VPS26C and VPS35L; the interactions are direct and associate SNX17 with the retriever complex.

Its subcellular location is the cytoplasm. The protein resides in the early endosome. The protein localises to the cytoplasmic vesicle membrane. Critical regulator of endosomal recycling of numerous surface proteins, including integrins, signaling receptor and channels. Binds to NPxY sequences in the cytoplasmic tails of target cargos. Associates with retriever and CCC complexes to prevent lysosomal degradation and promote cell surface recycling of numerous cargos such as integrins ITGB1, ITGB5 and their associated alpha subunits. Also required for maintenance of normal cell surface levels of APP and LRP1. Interacts with membranes containing phosphatidylinositol 3-phosphate (PtdIns(3P)). This Homo sapiens (Human) protein is Sorting nexin-17 (SNX17).